The sequence spans 165 residues: Peptidyl-prolyl cis-trans isomerase-like 1 (165 aa).

A PPIase cyclophilin-type domain is found at 3–157; it reads EREEVILDTS…IVQKILYALN (155 aa).

This sequence belongs to the cyclophilin-type PPIase family. PPIL1 subfamily.

It catalyses the reaction [protein]-peptidylproline (omega=180) = [protein]-peptidylproline (omega=0). Functionally, PPIases accelerate the folding of proteins. It catalyzes the cis-trans isomerization of proline imidic peptide bonds in oligopeptides. The polypeptide is Peptidyl-prolyl cis-trans isomerase-like 1 (cyp3) (Rhizopus delemar (strain RA 99-880 / ATCC MYA-4621 / FGSC 9543 / NRRL 43880) (Mucormycosis agent)).